The sequence spans 211 residues: Rho-related GTP-binding protein RhoF (211 aa).

Residue Met1 is modified to N-acetylmethionine. 26–33 (GDGGCGKT) contributes to the GTP binding site. The Effector region motif lies at 48–56 (YAPSVFEKY). GTP contacts are provided by residues 73–77 (DTAGQ) and 131–134 (CKTD). Cys208 bears the Cysteine methyl ester mark. A lipid anchor (S-geranylgeranyl cysteine) is attached at Cys208. The propeptide at 209–211 (LLL) is removed in mature form.

This sequence belongs to the small GTPase superfamily. Rho family.

It localises to the cell membrane. The protein localises to the cytoplasm. The protein resides in the cytoskeleton. Functionally, plasma membrane-associated small GTPase which cycles between an active GTP-bound and an inactive GDP-bound state. Causes the formation of thin, actin-rich surface projections called filopodia. Functions cooperatively with CDC42 and Rac to generate additional structures, increasing the diversity of actin-based morphology. The protein is Rho-related GTP-binding protein RhoF (RHOF) of Homo sapiens (Human).